The primary structure comprises 473 residues: ATP synthase subunit beta (473 aa).

153–160 provides a ligand contact to ATP; sequence GGAGVGKT.

This sequence belongs to the ATPase alpha/beta chains family. F-type ATPases have 2 components, CF(1) - the catalytic core - and CF(0) - the membrane proton channel. CF(1) has five subunits: alpha(3), beta(3), gamma(1), delta(1), epsilon(1). CF(0) has three main subunits: a(1), b(2) and c(9-12). The alpha and beta chains form an alternating ring which encloses part of the gamma chain. CF(1) is attached to CF(0) by a central stalk formed by the gamma and epsilon chains, while a peripheral stalk is formed by the delta and b chains.

The protein localises to the cell inner membrane. The catalysed reaction is ATP + H2O + 4 H(+)(in) = ADP + phosphate + 5 H(+)(out). In terms of biological role, produces ATP from ADP in the presence of a proton gradient across the membrane. The catalytic sites are hosted primarily by the beta subunits. The sequence is that of ATP synthase subunit beta from Rickettsia conorii (strain ATCC VR-613 / Malish 7).